Reading from the N-terminus, the 1984-residue chain is Sodium channel protein type 9 subunit alpha (1984 aa).

The Cytoplasmic portion of the chain corresponds to 1-125; sequence MAMLPPPGPQ…RRISIKILVH (125 aa). Basic and acidic residues predominate over residues 26–39; sequence RISEEKAKGHKDEK. Residues 26–55 are disordered; it reads RISEEKAKGHKDEKKDDEEEGPKPSSDLEA. An I repeat occupies 112–410; sequence FSPLRRISIK…VAMAYEEQNQ (299 aa). Residues 126–145 traverse the membrane as a helical segment; sequence SLFSMLIMCTILTNCIFMTM. The Extracellular portion of the chain corresponds to 146 to 150; that stretch reads SNPPD. A helical membrane pass occupies residues 151 to 172; the sequence is WTKNVEYTFTGIYTFESLIKIL. Over 173–185 the chain is Cytoplasmic; the sequence is ARGFCVGEFTFLR. Residues 186-204 traverse the membrane as a helical segment; it reads DPWNWLDFVVIVFAYLTEF. At 205-210 the chain is on the extracellular side; sequence VNLGNV. The chain crosses the membrane as a helical span at residues 211–227; that stretch reads SALRTFRVLRALKTISV. Residues 228-241 are Cytoplasmic-facing; sequence IPGLKTIVGALIQS. A helical membrane pass occupies residues 242 to 267; it reads VKKLSDVMILTVFCLSVFALIGLQLF. The Extracellular segment spans residues 268-346; it reads MGNLKHKCFR…PDYGYTSFDT (79 aa). A disulfide bridge connects residues cysteine 275 and cysteine 324. The pore-forming intramembrane region spans 347-363; the sequence is FGWAFLALFRLMTQDYW. The Extracellular portion of the chain corresponds to 364–376; that stretch reads ENLYQQTLRAAGK. Residues 377–402 traverse the membrane as a helical segment; the sequence is TYMIFFVVVIFLGSFYLINLILAVVA. Residues 402–449 are a coiled coil; that stretch reads AMAYEEQNQANIEEAKQKELEFQQMLDRLKKEQEEAEAIAAAAAEYTS. At 403–744 the chain is on the cytoplasmic side; the sequence is MAYEEQNQAN…FIYFIVMDPF (342 aa). Low complexity predominate over residues 458–471; the sequence is LSESSSETSRLSSK. 2 disordered regions span residues 458-540 and 574-609; these read LSES…SIRG and HSIF…RSPP. Basic residues predominate over residues 474–486; that stretch reads KERRNRRKKKKQK. Basic and acidic residues-rich tracts occupy residues 489 to 509 and 574 to 584; these read SGEE…ESIR and HSIFGDNESRR. The stretch at 684–708 forms a coiled coil; that stretch reads LRQRAMSRASILTNTVEELEESRQK. An II repeat occupies 725 to 988; sequence CSPYWIKFKK…EEDTDANNLQ (264 aa). Residues 745 to 761 traverse the membrane as a helical segment; the sequence is VDLAITICIVLNTLFMA. Residues 762 to 770 lie on the Extracellular side of the membrane; the sequence is MEHHPMTDE. A helical membrane pass occupies residues 771–795; that stretch reads FKNVLAVGNLVFTGIFAAEMVLKLI. Over 796–804 the chain is Cytoplasmic; the sequence is AMDPYEYFQ. The chain crosses the membrane as a helical span at residues 805 to 821; it reads VGWNIFDSLIVTLSLVE. Residues 822 to 830 lie on the Extracellular side of the membrane; that stretch reads LFLADVEGL. A helical membrane pass occupies residues 831–847; the sequence is SVLRSFRLLRVFKLAKS. Residues 848–864 lie on the Cytoplasmic side of the membrane; it reads WPTLNMLIKIIGNSVGA. The chain crosses the membrane as a helical span at residues 865-887; the sequence is LGNLTLVLAIIVFIFAVVGMQLF. The Extracellular segment spans residues 888–914; that stretch reads GKSYKECVCKINENCKLPRWHMNDFFH. Cysteine 896 and cysteine 902 form a disulfide bridge. Residues 915 to 927 constitute an intramembrane region (pore-forming); that stretch reads SFLIVFRVLCGEW. Over 928–939 the chain is Extracellular; that stretch reads IETMWDCMEVAG. The cysteines at positions 934 and 943 are disulfide-linked. A helical membrane pass occupies residues 940–966; the sequence is QTMCLIVYMMVMVIGNLVVLNLFLALL. At 967–1185 the chain is on the cytoplasmic side; it reads LSSFSSDNLT…WWTIRKTCYR (219 aa). Disordered regions lie at residues 1015–1039 and 1089–1145; these read KKPK…YISN and PIAP…EPIN. The span at 1019–1035 shows a compositional bias: basic and acidic residues; the sequence is GSKDTKRTADPNNKREN. Residues 1135–1145 show a composition bias toward acidic residues; that stretch reads GEEEAEAEPIN. An III repeat occupies 1178–1486; sequence TIRKTCYRIV…KKYYNAMKKL (309 aa). A helical transmembrane segment spans residues 1186-1210; it reads IVEHSWFESFIVLMILLSSGALAFE. Residues 1211 to 1222 are Extracellular-facing; that stretch reads DIYIEKKKTIKI. A helical transmembrane segment spans residues 1223 to 1248; that stretch reads ILEYADKIFTYIFILEMLLKWVAYGY. Topologically, residues 1249–1250 are cytoplasmic; the sequence is KT. The chain crosses the membrane as a helical span at residues 1251 to 1276; it reads YFTNAWCWLDFLIVDVSLVTLVANTL. Residues 1277–1285 are Extracellular-facing; sequence GYSDLGPIK. The chain crosses the membrane as a helical span at residues 1286 to 1302; the sequence is SLRTLRALRPLRALSRF. Residues 1303–1315 are Cytoplasmic-facing; the sequence is EGMRVVVNALIGA. Residues 1316 to 1340 form a helical membrane-spanning segment; the sequence is IPSIMNVLLVCLIFWLIFSIMGVNL. Over 1341–1392 the chain is Extracellular; that stretch reads FAGKFYECVNTTDGSRFSVSQVANRSECFALMNVSGNVRWKNLKVNFDNVGL. Residues cysteine 1348 and cysteine 1368 are joined by a disulfide bond. Residues 1393 to 1403 constitute an intramembrane region (pore-forming); it reads GYLSLLQVATF. The Extracellular segment spans residues 1404-1429; it reads KGWMDIMYAAVDSVNVNAQPIYEYNL. A helical transmembrane segment spans residues 1430–1455; the sequence is YMYIYFVIFIIFGSFFTLNLFIGVII. Topologically, residues 1456 to 1512 are cytoplasmic; the sequence is DNFNQQKKKLGGQDIFMTEEQKKYYNAMKKLGSKKPQKPIPRPGNKFQGCIFDLVTN. Serine 1488 is modified (phosphoserine; by PKC). The stretch at 1495–1793 is one IV repeat; that stretch reads IPRPGNKFQG…WEKFDPDATQ (299 aa). A helical membrane pass occupies residues 1513-1532; it reads QAFDITIMVLICLNMVTMMV. Over 1533–1543 the chain is Extracellular; it reads EKEGQTDYMSF. The helical transmembrane segment at 1544–1565 threads the bilayer; sequence VLYWINVVFIILFTGECVLKLI. Residues 1566-1574 lie on the Cytoplasmic side of the membrane; the sequence is SLRHYYFTV. The helical transmembrane segment at 1575 to 1596 threads the bilayer; that stretch reads GWNIFDFVVVILSIVGMFLAEM. Topologically, residues 1597-1605 are extracellular; it reads IEKYFVSPT. A helical transmembrane segment spans residues 1606-1625; the sequence is LFRVIRLARIGRILRLIKGA. At 1626–1638 the chain is on the cytoplasmic side; it reads KGIRTLLFALMMS. A helical transmembrane segment spans residues 1639-1661; that stretch reads LPALFNIGLLLFLVMFIYAIFGM. Residues 1662-1684 lie on the Extracellular side of the membrane; that stretch reads SNFAYVKKEAGINDMFNFETFGN. Residues 1685-1697 constitute an intramembrane region (pore-forming); sequence SMICLFQITTSAG. The Extracellular portion of the chain corresponds to 1698–1731; that stretch reads WDGLLAPILNSAPPDCDPKKVHPGSSVEGDCGNP. Residues cysteine 1713 and cysteine 1728 are joined by a disulfide bond. A helical membrane pass occupies residues 1732-1757; it reads SVGIFYFVSYIIISFLVVVNMYIAVI. At 1758–1984 the chain is on the cytoplasmic side; it reads LENFSVATEE…EDKEKDESRK (227 aa). The IQ domain maps to 1887–1916; sequence EDVSATIIQRAYRRYRLRQNVKNISSIYIK. The segment at 1933-1984 is disordered; that stretch reads DNVNENSSPEKTDATASTISPPSYDSVTKPDQEKYETDKTEKEDKEKDESRK. A compositionally biased stretch (polar residues) spans 1946 to 1958; the sequence is ATASTISPPSYDS. Over residues 1960–1984 the composition is skewed to basic and acidic residues; sequence TKPDQEKYETDKTEKEDKEKDESRK.

Belongs to the sodium channel (TC 1.A.1.10) family. Nav1.7/SCN9A subfamily. The Nav1.7 voltage-gated sodium channel consists of an ion-conducting alpha subunit SCN9A which is functional on its own regulated by one or more beta-1 (SCN1B), beta-2 (SCN2B), beta-3 (SCN3B) and beta-4 (SCN4B) subunits. SCN1B and SCN3B are non-covalently associated with SCN9A. SCN2B and SCN4B are disulfide-linked to SCN9A. SCN1B regulates channel inactivation. Interacts with NEDD4 and NEDD4L; regulates Nav1.7 activity most probably through ubiquitination and subsequent endocytosis. Interacts with TMEM233; modulates the gating properties of NaV1.7. Post-translationally, ubiquitinated by NEDD4L; which may promote its endocytosis. In terms of processing, phosphorylation at Ser-1488 by PKC in a highly conserved cytoplasmic loop increases peak sodium currents. As to expression, expressed strongly in sciatic nerves, with moderate levels in kidney. Not detected in liver, brain and muscle.

It localises to the cell membrane. Its subcellular location is the cell projection. The protein localises to the neuron projection. The protein resides in the axon. The enzyme catalyses Na(+)(in) = Na(+)(out). Its function is as follows. Pore-forming subunit of Nav1.7, a voltage-gated sodium (Nav) channel that directly mediates the depolarizing phase of action potentials in excitable membranes. Navs, also called VGSCs (voltage-gated sodium channels) or VDSCs (voltage-dependent sodium channels), operate by switching between closed and open conformations depending on the voltage difference across the membrane. In the open conformation they allow Na(+) ions to selectively pass through the pore, along their electrochemical gradient. The influx of Na(+) ions provokes membrane depolarization, initiating the propagation of electrical signals throughout cells and tissues. Nav1.7 plays a crucial role in controlling the excitability and action potential propagation from nociceptor neurons, thereby contributing to the sensory perception of pain. The protein is Sodium channel protein type 9 subunit alpha of Mus musculus (Mouse).